The following is a 177-amino-acid chain: Large ribosomal subunit protein uL6 (177 aa).

This sequence belongs to the universal ribosomal protein uL6 family. As to quaternary structure, part of the 50S ribosomal subunit.

In terms of biological role, this protein binds to the 23S rRNA, and is important in its secondary structure. It is located near the subunit interface in the base of the L7/L12 stalk, and near the tRNA binding site of the peptidyltransferase center. The chain is Large ribosomal subunit protein uL6 from Teredinibacter turnerae (strain ATCC 39867 / T7901).